Reading from the N-terminus, the 102-residue chain is Small ribosomal subunit protein uS10 (102 aa).

Belongs to the universal ribosomal protein uS10 family. As to quaternary structure, part of the 30S ribosomal subunit.

Its function is as follows. Involved in the binding of tRNA to the ribosomes. This is Small ribosomal subunit protein uS10 from Acidithiobacillus ferrooxidans (strain ATCC 53993 / BNL-5-31) (Leptospirillum ferrooxidans (ATCC 53993)).